The following is a 385-amino-acid chain: Putative nickel insertion protein (385 aa).

The protein belongs to the LarC family.

This Citrifermentans bemidjiense (strain ATCC BAA-1014 / DSM 16622 / JCM 12645 / Bem) (Geobacter bemidjiensis) protein is Putative nickel insertion protein.